Reading from the N-terminus, the 1820-residue chain is uncharacterized protein (1820 aa).

9 disordered regions span residues 1–73 (MQWT…TLSG), 86–158 (TTTT…VRSA), 226–260 (GSSG…NNNY), 286–366 (EERA…QETE), 453–497 (DVQD…RNLS), 519–548 (LSSI…TDTA), 577–597 (GNSS…PPTP), 619–689 (GAGT…TASG), and 735–830 (HSHN…TPSS). Positions 20-31 (NRNSIEQRTPAN) are enriched in polar residues. The segment covering 86–128 (TTTTTIIESSSSTNTTLEKNSPSPAGGSCSSGSGSLSPAYLQH) has biased composition (low complexity). Over residues 129–146 (HLQHHGSPLHHLQVHHHT) the composition is skewed to basic residues. Residues 247–259 (SNSSNCSSQFNNN) show a composition bias toward low complexity. Residues 265–308 (VDSLDDMLRKLTELEQRVIEAEERAEEAEDKVRAMEQRLSEWPK) are a coiled coil. The segment covering 294-305 (DKVRAMEQRLSE) has biased composition (basic and acidic residues). The span at 346-358 (ASGGATAGAAGSG) shows a compositional bias: low complexity. Residues 362 to 438 (TQETEKTITS…LKNHIANQSQ (77 aa)) adopt a coiled-coil conformation. Positions 453 to 463 (DVQDFTGSGSN) are enriched in polar residues. Residues Ser542 and Ser543 each carry the phosphoserine modification. Low complexity predominate over residues 623–632 (GTSTAESTAS). Gly residues predominate over residues 655 to 669 (HGSGTGIGTGDGHGT). A compositionally biased stretch (low complexity) spans 738 to 769 (NSSSTDNTETSTSGSASSPSKSLKTSSSLSPA). Polar residues predominate over residues 787–818 (QSRTSTTPSSRINQHLQPSQHQHHTLSNQNHG). PH domains lie at 909–1003 (SLEK…NVQR) and 1017–1124 (KPTV…VVSG). 3 positions are modified to phosphoserine: Ser1073, Ser1075, and Ser1077. In terms of domain architecture, MyTH4 spans 1159 to 1378 (HTKDTITAPL…PSRMEVLSIL (220 aa)). The 324-residue stretch at 1389-1712 (HAIPVHMMNS…DYMNALGHTV (324 aa)) folds into the FERM domain. Disordered stretches follow at residues 1713–1748 (PGTP…ATGF) and 1764–1820 (ATHT…QRIK). A compositionally biased stretch (polar residues) spans 1714–1724 (GTPQMNSLTRN). Over residues 1764–1781 (ATHTLNSNHSHTLSSSHH) the composition is skewed to low complexity. Over residues 1805–1820 (HQPDILKSTPDHQRIK) the composition is skewed to basic and acidic residues.

This is an uncharacterized protein from Drosophila melanogaster (Fruit fly).